A 215-amino-acid chain; its full sequence is Large ribosomal subunit protein bL25 (215 aa).

Polar residues-rich tracts occupy residues 1–19 and 206–215; these read MAKSTVNKLSVSVRTNTGK and ENKTAATESE. Disordered stretches follow at residues 1-29 and 190-215; these read MAKSTVNKLSVSVRTNTGKGASRRARRDG and AKYAGEAHEAPEVGTAENKTAATESE.

It belongs to the bacterial ribosomal protein bL25 family. CTC subfamily. In terms of assembly, part of the 50S ribosomal subunit; part of the 5S rRNA/L5/L18/L25 subcomplex. Contacts the 5S rRNA. Binds to the 5S rRNA independently of L5 and L18.

Its function is as follows. This is one of the proteins that binds to the 5S RNA in the ribosome where it forms part of the central protuberance. This Mycobacterium leprae (strain TN) protein is Large ribosomal subunit protein bL25.